Reading from the N-terminus, the 433-residue chain is Cysteine--tRNA ligase (433 aa).

C4 is a binding site for Zn(2+). Residues 6-16 carry the 'HIGH' region motif; the sequence is PTVYDTAHIGN. Residues C188, H213, and E217 each contribute to the Zn(2+) site. The short motif at 246–250 is the 'KMSKS' region element; that stretch reads KMSKS. K249 is a binding site for ATP.

Belongs to the class-I aminoacyl-tRNA synthetase family. As to quaternary structure, monomer. It depends on Zn(2+) as a cofactor.

It localises to the cytoplasm. The enzyme catalyses tRNA(Cys) + L-cysteine + ATP = L-cysteinyl-tRNA(Cys) + AMP + diphosphate. This is Cysteine--tRNA ligase from Wolbachia sp. subsp. Brugia malayi (strain TRS).